A 173-amino-acid chain; its full sequence is T cell receptor gamma constant 1 (173 aa).

One can recognise an Ig-like domain in the interval 10–104 (PKPTIFLPSI…NKNGVDQEII (95 aa)). Cysteine 32 and cysteine 88 are oxidised to a cystine. 4 N-linked (GlcNAc...) asparagine glycosylation sites follow: asparagine 66, asparagine 120, asparagine 126, and asparagine 135. Residues 139 to 161 (YYMYLLLLLKSVVYFAIITCCLL) form a helical membrane-spanning segment.

In terms of assembly, gamma-delta TR is a heterodimer composed of a gamma and delta chain; disulfide-linked. The gamma-delta TR is associated with the transmembrane signaling CD3 coreceptor proteins following the stoichiometry: a single gamma-delta TR heterodimer associates with one CD3D-CD3E heterodimer, one CD3G-CD3E heterodimer and one CD247 homodimer forming a stable octameric structure. Upon activation, gamma-delta TR complex associates with FCER1G to initiate intracellular signaling.

It localises to the cell membrane. Functionally, constant region of T cell receptor (TR) gamma chain that participates in the antigen recognition. Gamma-delta TRs recognize a variety of self and foreign non-peptide antigens frequently expressed at the epithelial boundaries between the host and external environment, including endogenous lipids presented by MH-like protein CD1D and phosphoantigens presented by butyrophilin-like molecule BTN3A1. Upon antigen recognition induces rapid, innate-like immune responses involved in pathogen clearance and tissue repair. Binding of gamma-delta TR complex to antigen triggers phosphorylation of immunoreceptor tyrosine-based activation motifs (ITAMs) in the CD3 chains by the LCK and FYN kinases, allowing the recruitment, phosphorylation, and activation of ZAP70 that facilitates phosphorylation of the scaffolding proteins LCP2 and LAT. This lead to the formation of a supramolecular signalosome that recruits the phospholipase PLCG1, resulting in calcium mobilization and ERK activation, ultimately leading to T cell expansion and differentiation into effector cells. Gamma-delta TRs are produced through somatic rearrangement of a limited repertoire of variable (V), diversity (D), and joining (J) genes. The potential diversity of gamma-delta TRs is conferred by the unique ability to rearrange (D) genes in tandem and to utilize all three reading frames. The combinatorial diversity is considerably increased by the sequence exonuclease trimming and random nucleotide (N) region additions which occur during the V-(D)-J rearrangements. This chain is T cell receptor gamma constant 1, found in Homo sapiens (Human).